The primary structure comprises 179 residues: Large ribosomal subunit protein uL5 (179 aa).

The protein belongs to the universal ribosomal protein uL5 family. As to quaternary structure, part of the 50S ribosomal subunit; part of the 5S rRNA/L5/L18/L25 subcomplex. Contacts the 5S rRNA and the P site tRNA. Forms a bridge to the 30S subunit in the 70S ribosome.

Its function is as follows. This is one of the proteins that bind and probably mediate the attachment of the 5S RNA into the large ribosomal subunit, where it forms part of the central protuberance. In the 70S ribosome it contacts protein S13 of the 30S subunit (bridge B1b), connecting the 2 subunits; this bridge is implicated in subunit movement. Contacts the P site tRNA; the 5S rRNA and some of its associated proteins might help stabilize positioning of ribosome-bound tRNAs. The sequence is that of Large ribosomal subunit protein uL5 from Erwinia tasmaniensis (strain DSM 17950 / CFBP 7177 / CIP 109463 / NCPPB 4357 / Et1/99).